The following is a 250-amino-acid chain: 3-deoxy-manno-octulosonate cytidylyltransferase (250 aa).

It belongs to the KdsB family.

The protein localises to the cytoplasm. The enzyme catalyses 3-deoxy-alpha-D-manno-oct-2-ulosonate + CTP = CMP-3-deoxy-beta-D-manno-octulosonate + diphosphate. Its pathway is nucleotide-sugar biosynthesis; CMP-3-deoxy-D-manno-octulosonate biosynthesis; CMP-3-deoxy-D-manno-octulosonate from 3-deoxy-D-manno-octulosonate and CTP: step 1/1. It functions in the pathway bacterial outer membrane biogenesis; lipopolysaccharide biosynthesis. In terms of biological role, activates KDO (a required 8-carbon sugar) for incorporation into bacterial lipopolysaccharide in Gram-negative bacteria. This Actinobacillus pleuropneumoniae serotype 7 (strain AP76) protein is 3-deoxy-manno-octulosonate cytidylyltransferase.